We begin with the raw amino-acid sequence, 375 residues long: Chaperone protein DnaJ (375 aa).

Residues 5-70 enclose the J domain; it reads DYYEVLGVAR…NKRRAYDAHG (66 aa). The CR-type zinc-finger motif lies at 131–208; sequence GIERRIEIPT…CHGAGRVEED (78 aa). 8 residues coordinate Zn(2+): Cys144, Cys147, Cys160, Cys163, Cys182, Cys185, Cys196, and Cys199. CXXCXGXG motif repeat units follow at residues 144-151, 160-167, 182-189, and 196-203; these read CAPCHGSG, CGTCHGRG, CPHCDGRG, and CKTCHGAG.

Belongs to the DnaJ family. Homodimer. Zn(2+) is required as a cofactor.

The protein localises to the cytoplasm. In terms of biological role, participates actively in the response to hyperosmotic and heat shock by preventing the aggregation of stress-denatured proteins and by disaggregating proteins, also in an autonomous, DnaK-independent fashion. Unfolded proteins bind initially to DnaJ; upon interaction with the DnaJ-bound protein, DnaK hydrolyzes its bound ATP, resulting in the formation of a stable complex. GrpE releases ADP from DnaK; ATP binding to DnaK triggers the release of the substrate protein, thus completing the reaction cycle. Several rounds of ATP-dependent interactions between DnaJ, DnaK and GrpE are required for fully efficient folding. Also involved, together with DnaK and GrpE, in the DNA replication of plasmids through activation of initiation proteins. This is Chaperone protein DnaJ from Xanthomonas euvesicatoria pv. vesicatoria (strain 85-10) (Xanthomonas campestris pv. vesicatoria).